The primary structure comprises 575 residues: Glycosyltransferase family 92 protein At1g27200 (575 aa).

The helical transmembrane segment at 22–44 (FLSQRYLILCFCCFFVLLFFLSS) threads the bilayer. In terms of domain architecture, GT92 spans 293 to 540 (LCVCTMLWNQ…TEAIEPPDWK (248 aa)).

Belongs to the glycosyltransferase 92 family.

The protein localises to the membrane. This chain is Glycosyltransferase family 92 protein At1g27200, found in Arabidopsis thaliana (Mouse-ear cress).